The sequence spans 225 residues: Mediator of RNA polymerase II transcription subunit 8 (225 aa).

The segment at 1-24 (MNSIHSANSNTVSTSEINTSQIPT) is disordered. Residues 170 to 204 (VEELKYLDSEDEKKETEENKKIENQKYEEELKITA) are a coiled coil.

This sequence belongs to the Mediator complex subunit 8 family. Component of the Mediator complex.

The protein resides in the nucleus. Its function is as follows. Component of the Mediator complex, a coactivator involved in the regulated transcription of nearly all RNA polymerase II-dependent genes. Mediator functions as a bridge to convey information from gene-specific regulatory proteins to the basal RNA polymerase II transcription machinery. Mediator is recruited to promoters by direct interactions with regulatory proteins and serves as a scaffold for the assembly of a functional preinitiation complex with RNA polymerase II and the general transcription factors. The sequence is that of Mediator of RNA polymerase II transcription subunit 8 (MED8) from Debaryomyces hansenii (strain ATCC 36239 / CBS 767 / BCRC 21394 / JCM 1990 / NBRC 0083 / IGC 2968) (Yeast).